The chain runs to 176 residues: Cathelicidin-2 (176 aa).

The first 29 residues, 1–29, serve as a signal peptide directing secretion; sequence METQGASLSLGRWSLWLLLLGLVLPSASA. Residue glutamine 30 is modified to Pyrrolidone carboxylic acid. Residues 30–130 constitute a propeptide that is removed on maturation; that stretch reads QALSYREAVL…DINCNELQSV (101 aa). Cystine bridges form between cysteine 85-cysteine 96 and cysteine 107-cysteine 124. The segment at 135–176 is disordered; it reads PIRRPPIRPPFRPPFRPPVRPPIRPPFRPPFRPPIGPFPGRR. Pro residues predominate over residues 141–176; sequence IRPPFRPPFRPPVRPPIRPPFRPPFRPPIGPFPGRR. Proline 173 is modified (proline amide). A propeptide spans 174 to 176 (removed in mature form); that stretch reads GRR.

Belongs to the cathelicidin family. Post-translationally, elastase is responsible for its maturation.

It localises to the secreted. Binds to the lipid A moiety of bacterial lipipolysaccharides (LPS), a glycolipid present in the outer membrane of all Gram-negative bacteria. Potent antimicrobial activity. The polypeptide is Cathelicidin-2 (CATHL2) (Ovis aries (Sheep)).